We begin with the raw amino-acid sequence, 447 residues long: Tubulin alpha-2 chain (447 aa).

GTP contacts are provided by Q11, E71, G144, T145, T179, N206, and N228. A Mg(2+)-binding site is contributed by E71. Residue E254 is part of the active site.

Belongs to the tubulin family. In terms of assembly, dimer of alpha and beta chains. A typical microtubule is a hollow water-filled tube with an outer diameter of 25 nm and an inner diameter of 15 nM. Alpha-beta heterodimers associate head-to-tail to form protofilaments running lengthwise along the microtubule wall with the beta-tubulin subunit facing the microtubule plus end conferring a structural polarity. Microtubules usually have 13 protofilaments but different protofilament numbers can be found in some organisms and specialized cells. It depends on Mg(2+) as a cofactor. Undergoes a tyrosination/detyrosination cycle, the cyclic removal and re-addition of a C-terminal tyrosine residue by the enzymes tubulin tyrosine carboxypeptidase (TTCP) and tubulin tyrosine ligase (TTL), respectively.

It localises to the cytoplasm. The protein localises to the cytoskeleton. It catalyses the reaction GTP + H2O = GDP + phosphate + H(+). In terms of biological role, tubulin is the major constituent of microtubules, a cylinder consisting of laterally associated linear protofilaments composed of alpha- and beta-tubulin heterodimers. Microtubules grow by the addition of GTP-tubulin dimers to the microtubule end, where a stabilizing cap forms. Below the cap, tubulin dimers are in GDP-bound state, owing to GTPase activity of alpha-tubulin. The chain is Tubulin alpha-2 chain (TUBA2) from Eleusine indica (Goosegrass).